We begin with the raw amino-acid sequence, 220 residues long: Protein GrpE (220 aa).

2 stretches are compositionally biased toward polar residues: residues 1 to 12 and 50 to 63; these read MEQGDKQATYNE and AAST…QTSV. The disordered stretch occupies residues 1-67; sequence MEQGDKQATY…AEQTSVEAEE (67 aa).

Belongs to the GrpE family. In terms of assembly, homodimer.

Its subcellular location is the cytoplasm. Functionally, participates actively in the response to hyperosmotic and heat shock by preventing the aggregation of stress-denatured proteins, in association with DnaK and GrpE. It is the nucleotide exchange factor for DnaK and may function as a thermosensor. Unfolded proteins bind initially to DnaJ; upon interaction with the DnaJ-bound protein, DnaK hydrolyzes its bound ATP, resulting in the formation of a stable complex. GrpE releases ADP from DnaK; ATP binding to DnaK triggers the release of the substrate protein, thus completing the reaction cycle. Several rounds of ATP-dependent interactions between DnaJ, DnaK and GrpE are required for fully efficient folding. This Geobacillus thermodenitrificans (strain NG80-2) protein is Protein GrpE.